The chain runs to 391 residues: Anhydro-N-acetylmuramic acid kinase (391 aa).

9–16 lines the ATP pocket; sequence GTSVDGID.

This sequence belongs to the anhydro-N-acetylmuramic acid kinase family.

The enzyme catalyses 1,6-anhydro-N-acetyl-beta-muramate + ATP + H2O = N-acetyl-D-muramate 6-phosphate + ADP + H(+). It participates in amino-sugar metabolism; 1,6-anhydro-N-acetylmuramate degradation. Its pathway is cell wall biogenesis; peptidoglycan recycling. Catalyzes the specific phosphorylation of 1,6-anhydro-N-acetylmuramic acid (anhMurNAc) with the simultaneous cleavage of the 1,6-anhydro ring, generating MurNAc-6-P. Is required for the utilization of anhMurNAc either imported from the medium or derived from its own cell wall murein, and thus plays a role in cell wall recycling. The polypeptide is Anhydro-N-acetylmuramic acid kinase (Gloeothece citriformis (strain PCC 7424) (Cyanothece sp. (strain PCC 7424))).